The chain runs to 737 residues: Delta and Notch-like epidermal growth factor-related receptor (737 aa).

A signal peptide spans 1–34; sequence MQPRRAQAPGAQLLPALALLLLLLGAGPRGSSLA. Residues 35 to 640 are Extracellular-facing; sequence NPVPAAPLSA…LTNMPRHSLY (606 aa). 2 consecutive EGF-like domains span residues 44-92 and 94-133; these read APGP…ANCQ and VADP…PNCE. Residues 44-133 form an interaction with NOTCH1 region; it reads APGPCAAQPC…NEGYEGPNCE (90 aa). 6 disulfides stabilise this stretch: C48-C59, C53-C80, C82-C91, C98-C108, C103-C121, and C123-C132. N223 is a glycosylation site (N-linked (GlcNAc...) asparagine). EGF-like domains follow at residues 309-348, 349-390, 392-428, 430-466, and 468-503; these read PGES…TFCE, EYDA…ELCQ, KIDY…SACE, KVDP…PTCA, and LIDF…LYCE. 23 cysteine pairs are disulfide-bonded: C319/C336, C338/C347, C353/C364, C358/C378, C380/C389, C396/C407, C401/C416, C418/C427, C434/C445, C439/C454, C456/C465, C472/C482, C477/C491, C493/C502, C509/C520, C514/C529, C531/C540, C547/C558, C552/C567, C569/C578, C585/C596, C590/C605, and C607/C616. The region spanning 505–541 is the EGF-like 8; calcium-binding domain; it reads EYNECLSAPCLNAATCRDLVNGYECVCLAEYKGTHCE. The region spanning 543–579 is the EGF-like 9 domain; that stretch reads YKDPCANVSCLNGATCDSDGLNGTCICAPGFTGEECD. In terms of domain architecture, Follistatin-like spans 546 to 568; the sequence is PCANVSCLNGATCDSDGLNGTCI. N564 is a glycosylation site (N-linked (GlcNAc...) asparagine). The 37-residue stretch at 581–617 folds into the EGF-like 10; calcium-binding domain; it reads DINECDSNPCHHGGSCLDQPNGYNCHCPHGWVGANCE. Residues 641–661 form a helical membrane-spanning segment; sequence IIIGALCVAFILMLIILIVGI. Topologically, residues 662 to 737 are cytoplasmic; that stretch reads CRISRIEYQG…LVTLIKTKDL (76 aa). The interval 677–680 is interaction with AP1G1 and somatodendritic targeting; the sequence is YEEF. S685 carries the phosphoserine modification. 2 positions are modified to phosphotyrosine: Y711 and Y721. S722 bears the Phosphoserine mark.

In terms of assembly, interacts with AP1G1. Interacts with NOTCH1. As to expression, expressed in brain, spinal cord and adrenal gland.

Its subcellular location is the cell membrane. Activator of the NOTCH1 pathway. May mediate neuron-glia interaction during astrocytogenesis. This chain is Delta and Notch-like epidermal growth factor-related receptor (DNER), found in Homo sapiens (Human).